A 563-amino-acid polypeptide reads, in one-letter code: MELVIGLLVILLALFAAGYFFRKKIYTEIDRLESWKIEILNRSIVEEMSKIKHLKMTGETEEFFERWREEWDEIVTAHLPKVEELLYDAEENADKYRFKKANQVLVHIDDLLTAAESNIEGILREISDLVTSEEKSRGEIEQVRERYSKARKNLLAYSHLYGELYNSLETDLDEIWSGIKEFEEETESGNYIKARKVLLEQDRRLDQLQTYIDDVPKLLADCKQTVPNQIAKLKDGYREMTEKGYKLEHIQIEKELDTLTNQVKRAENALLEELDVDEASAILQLIDETIQSMYEQLEGEVEAGQSVLSKMPELIIAYEKLEEEKDRTKTETELVKESYQLTAGEIGRQHAFEKQLETIGRLLEQAREKLDGEHVAYSLLIEEVEAIEKQLEEAQKEHAEYRENLQALRKEELQARETLMHLRKTISDTARMLQKSNVPGIPEQVKDKLETANHHIEETVSQLEELPLNMEEAAKHLDEAEKVVEEVSEEAEDLVIQVKLIERIIQYGNRFRSQNHILSEQLKEAERLFYAYSYNEAYEMAADAVEKAAPGAVKKIKADQSAS.

Topologically, residues 1-2 (ME) are extracellular. Residues 3 to 21 (LVIGLLVILLALFAAGYFF) form a helical membrane-spanning segment. At 22–563 (RKKIYTEIDR…KKIKADQSAS (542 aa)) the chain is on the cytoplasmic side. Coiled coils occupy residues 133-159 (EEKS…AYSH), 243-276 (KGYK…ELDV), and 309-529 (SKMP…ERLF).

It belongs to the EzrA family.

The protein resides in the cell membrane. Its function is as follows. Negative regulator of FtsZ ring formation; modulates the frequency and position of FtsZ ring formation. Inhibits FtsZ ring formation at polar sites. Interacts either with FtsZ or with one of its binding partners to promote depolymerization. In Bacillus velezensis (strain DSM 23117 / BGSC 10A6 / LMG 26770 / FZB42) (Bacillus amyloliquefaciens subsp. plantarum), this protein is Septation ring formation regulator EzrA.